The primary structure comprises 279 residues: Diaminopimelate epimerase (279 aa).

Substrate-binding residues include N12, Q45, and N65. C74 (proton donor) is an active-site residue. Substrate-binding positions include 75–76 (GN), N162, N195, and 213–214 (ER). C222 serves as the catalytic Proton acceptor. Substrate is bound at residue 223–224 (GS).

The protein belongs to the diaminopimelate epimerase family. In terms of assembly, homodimer.

It is found in the cytoplasm. It carries out the reaction (2S,6S)-2,6-diaminopimelate = meso-2,6-diaminopimelate. It participates in amino-acid biosynthesis; L-lysine biosynthesis via DAP pathway; DL-2,6-diaminopimelate from LL-2,6-diaminopimelate: step 1/1. Functionally, catalyzes the stereoinversion of LL-2,6-diaminopimelate (L,L-DAP) to meso-diaminopimelate (meso-DAP), a precursor of L-lysine and an essential component of the bacterial peptidoglycan. This Shewanella loihica (strain ATCC BAA-1088 / PV-4) protein is Diaminopimelate epimerase.